We begin with the raw amino-acid sequence, 448 residues long: tRNA(Ile)-lysidine synthase (448 aa).

28 to 33 (STGVDS) is a binding site for ATP.

The protein belongs to the tRNA(Ile)-lysidine synthase family.

It is found in the cytoplasm. It catalyses the reaction cytidine(34) in tRNA(Ile2) + L-lysine + ATP = lysidine(34) in tRNA(Ile2) + AMP + diphosphate + H(+). Functionally, ligates lysine onto the cytidine present at position 34 of the AUA codon-specific tRNA(Ile) that contains the anticodon CAU, in an ATP-dependent manner. Cytidine is converted to lysidine, thus changing the amino acid specificity of the tRNA from methionine to isoleucine. This chain is tRNA(Ile)-lysidine synthase, found in Lactiplantibacillus plantarum (strain ATCC BAA-793 / NCIMB 8826 / WCFS1) (Lactobacillus plantarum).